The following is a 262-amino-acid chain: Small ribosomal subunit protein eS1 (262 aa).

It belongs to the eukaryotic ribosomal protein eS1 family. In terms of assembly, component of the small ribosomal subunit. Mature ribosomes consist of a small (40S) and a large (60S) subunit. The 40S subunit contains about 33 different proteins and 1 molecule of RNA (18S). The 60S subunit contains about 49 different proteins and 3 molecules of RNA (25S, 5.8S and 5S).

The protein resides in the cytoplasm. In Theileria annulata, this protein is Small ribosomal subunit protein eS1.